We begin with the raw amino-acid sequence, 421 residues long: Tyrosine--tRNA ligase (421 aa).

Residue Tyr42 participates in L-tyrosine binding. The short motif at 47–56 is the 'HIGH' region element; it reads CTAPSLHVGS. The L-tyrosine site is built by Tyr179 and Gln183. A 'KMSKS' region motif is present at residues 239–243; it reads KMGKT. Lys242 serves as a coordination point for ATP. In terms of domain architecture, S4 RNA-binding spans 354–419; it reads LGILAAFAKA…RKKHVLLRLA (66 aa).

Belongs to the class-I aminoacyl-tRNA synthetase family. TyrS type 1 subfamily. In terms of assembly, homodimer.

Its subcellular location is the cytoplasm. The enzyme catalyses tRNA(Tyr) + L-tyrosine + ATP = L-tyrosyl-tRNA(Tyr) + AMP + diphosphate + H(+). Catalyzes the attachment of tyrosine to tRNA(Tyr) in a two-step reaction: tyrosine is first activated by ATP to form Tyr-AMP and then transferred to the acceptor end of tRNA(Tyr). The protein is Tyrosine--tRNA ligase of Beijerinckia indica subsp. indica (strain ATCC 9039 / DSM 1715 / NCIMB 8712).